The primary structure comprises 68 residues: Neuronal regeneration-related protein (68 aa).

Residues 42-68 (EETGAASLTPPGSREFTSPATSYLHPF) are disordered.

Interacts with FLNA. Interacts with the latency-associated peptides (LAP) of TGFB1 and TGFB2; the interaction results in a decrease in TGFB autoinduction. Phosphorylated on Ser-59. Phosphorylation decreases stability and activity. In terms of tissue distribution, expressed in brain and fetal lung.

It is found in the cytoplasm. Functionally, may have roles in cellular differentiation. Ectopic expression induces differentiation of fibroblast into myofibroblast and myofibroblast ameboid migration. Increases retinoic-acid regulation of lipid-droplet biogenesis. May also have neural functions. Promotes axonal regeneration and augments motility of gliomas. Down-regulates the expression of TGFB1 and TGFB2 but not of TGFB3. May play a role in the regulation of alveolar generation. The protein is Neuronal regeneration-related protein (Nrep) of Mus musculus (Mouse).